Consider the following 109-residue polypeptide: uncharacterized protein (109 aa).

A helical membrane pass occupies residues Leu-75–Tyr-95.

Its subcellular location is the membrane. This is an uncharacterized protein from Schizosaccharomyces pombe (strain 972 / ATCC 24843) (Fission yeast).